Reading from the N-terminus, the 308-residue chain is Dipeptide transport system permease protein DppB (308 aa).

The next 7 helical transmembrane spans lie at 10–30 (WAMA…MKVI), 59–79 (LIFQ…GPSI), 100–120 (LGMT…VIAA), 131–151 (AMSL…TLLI), 168–188 (SPIH…AIIA), 228–248 (MPVI…SFVI), and 278–298 (VFYS…YGLL). An ABC transmembrane type-1 domain is found at 94–295 (FPVSFELGMT…IMLFLVDLAY (202 aa)).

This sequence belongs to the binding-protein-dependent transport system permease family. OppBC subfamily.

The protein localises to the cell membrane. Its function is as follows. Probably part of the ABC transporter DppBCDE involved in dipeptide transport. Responsible for the translocation of the substrate across the membrane. The sequence is that of Dipeptide transport system permease protein DppB (dppB) from Bacillus subtilis (strain 168).